Consider the following 83-residue polypeptide: Toxin TdNa3 (83 aa).

The N-terminal stretch at 1 to 20 is a signal peptide; that stretch reads MKGMIMLISCLMLIDVVVES. The 62-residue stretch at 21–82 folds into the LCN-type CS-alpha/beta domain; it reads KNGYIIEPKG…IFDYYNNKCG (62 aa). 4 disulfide bridges follow: C31/C81, C35/C57, C43/C62, and C47/C64. A Cysteine amide modification is found at C81.

The protein belongs to the long (4 C-C) scorpion toxin superfamily. Sodium channel inhibitor family. Beta subfamily. In terms of tissue distribution, expressed by the venom gland.

Its subcellular location is the secreted. Its function is as follows. Inhibits the sodium currents (Nav) in an apparent irreversible manner. Produces small depolarization and induces repetitive firing in squid axons. Is specific for arthropods (crickets, triatomides, crabs and squids), but is non-toxic to mice. In Tityus discrepans (Venezuelan scorpion), this protein is Toxin TdNa3.